The chain runs to 667 residues: Coiled-coil domain-containing protein 154 (667 aa).

Coiled coils occupy residues 76-182, 215-302, 384-410, and 457-521; these read VVEL…QEAG, RRVD…GQHE, LLREKSRALEASVAQLAGQLKELSGHL, and LRGV…KEDN.

The protein localises to the early endosome. This chain is Coiled-coil domain-containing protein 154, found in Homo sapiens (Human).